The sequence spans 512 residues: Monocarboxylate transporter 14 (512 aa).

Residues M1 to D29 are Cytoplasmic-facing. 12 consecutive transmembrane segments (helical) span residues I30–M50, W76–I96, A105–V125, F129–V149, L161–L181, A193–M211, M317–I337, F355–V375, I381–L401, L410–V430, I446–F466, and F476–I496. The Cytoplasmic portion of the chain corresponds to Q497–V512.

It belongs to the major facilitator superfamily. Monocarboxylate porter (TC 2.A.1.13) family.

The protein localises to the cell membrane. In terms of biological role, proton-linked monocarboxylate transporter. May catalyze the transport of monocarboxylates across the plasma membrane. The chain is Monocarboxylate transporter 14 (Slc16a14) from Mus musculus (Mouse).